Here is a 775-residue protein sequence, read N- to C-terminus: Mitochondrial intermediate peptidase (775 aa).

A mitochondrion-targeting transit peptide spans 1–28 (MIARPARDVLSSATKKQFRFRGCLAARH). His558 is a Zn(2+) binding site. The active site involves Glu559. Zn(2+)-binding residues include His562 and His565.

It belongs to the peptidase M3 family. Zn(2+) serves as cofactor.

It localises to the mitochondrion matrix. The catalysed reaction is Release of an N-terminal octapeptide as second stage of processing of some proteins imported into the mitochondrion.. Cleaves proteins, imported into the mitochondrion, to their mature size. While most mitochondrial precursor proteins are processed to the mature form in one step by mitochondrial processing peptidase (MPP), the sequential cleavage by MIP of an octapeptide after initial processing by MPP is a required step for a subgroup of nuclear-encoded precursor proteins destined for the matrix or the inner membrane. The protein is Mitochondrial intermediate peptidase (OCT1) of Schizophyllum commune (Split gill fungus).